Consider the following 400-residue polypeptide: Enoyl-[acyl-carrier-protein] reductase [NADH] (400 aa).

Residues 48–53 (GASTGY), 74–75 (FE), 111–112 (DA), and 139–140 (LA) each bind NAD(+). Tyr-225 lines the substrate pocket. Tyr-235 serves as the catalytic Proton donor. NAD(+) contacts are provided by residues Lys-244 and 273 to 275 (VVT).

This sequence belongs to the TER reductase family. In terms of assembly, monomer.

It catalyses the reaction a 2,3-saturated acyl-[ACP] + NAD(+) = a (2E)-enoyl-[ACP] + NADH + H(+). Its pathway is lipid metabolism; fatty acid biosynthesis. Its function is as follows. Involved in the final reduction of the elongation cycle of fatty acid synthesis (FAS II). Catalyzes the reduction of a carbon-carbon double bond in an enoyl moiety that is covalently linked to an acyl carrier protein (ACP). In Burkholderia ambifaria (strain ATCC BAA-244 / DSM 16087 / CCUG 44356 / LMG 19182 / AMMD) (Burkholderia cepacia (strain AMMD)), this protein is Enoyl-[acyl-carrier-protein] reductase [NADH].